Reading from the N-terminus, the 128-residue chain is Large ribosomal subunit protein bL12 (128 aa).

In terms of assembly, homodimer. Part of the 50S ribosomal subunit; present in 6 copies per ribosome. Forms part of the ribosomal stalk which helps the ribosome interact with GTP-bound translation factors. Forms a heptameric L10(L12)2(L12)2(L12)2 complex, where L10 forms an elongated spine to which 3 L12 dimers bind in a sequential fashion.

Its function is as follows. Forms part of the ribosomal stalk which helps the ribosome interact with GTP-bound translation factors. Is thus essential for accurate translation. The chain is Large ribosomal subunit protein bL12 from Thermotoga maritima (strain ATCC 43589 / DSM 3109 / JCM 10099 / NBRC 100826 / MSB8).